Consider the following 144-residue polypeptide: Large ribosomal subunit protein uL15 (144 aa).

The interval 1–52 (MRLNTISSAPGAKQAEKRVGRGIGSGWGKTCGRGHKGQKSRSGGFHKVGFEG) is disordered. The segment covering 21 to 31 (RGIGSGWGKTC) has biased composition (gly residues).

Belongs to the universal ribosomal protein uL15 family. Part of the 50S ribosomal subunit.

Binds to the 23S rRNA. This Nitrosococcus oceani (strain ATCC 19707 / BCRC 17464 / JCM 30415 / NCIMB 11848 / C-107) protein is Large ribosomal subunit protein uL15.